Consider the following 161-residue polypeptide: DNA-binding protein inhibitor ID-4 (161 aa).

Residues 52-104 (AAEAAADEPALCLQCDMNDCYSRLRRLVPTIPPNKKVSKVEILQHVIDYILDL) enclose the bHLH domain.

In terms of assembly, heterodimer with other HLH proteins.

Its subcellular location is the nucleus. In terms of biological role, transcriptional regulator (lacking a basic DNA binding domain) which negatively regulates the basic helix-loop-helix (bHLH) transcription factors by forming heterodimers and inhibiting their DNA binding and transcriptional activity. Implicated in regulating a variety of cellular processes, including cellular growth, senescence, differentiation, apoptosis, angiogenesis, and neoplastic transformation. This Mus musculus (Mouse) protein is DNA-binding protein inhibitor ID-4 (Id4).